A 318-amino-acid polypeptide reads, in one-letter code: Ribose-phosphate pyrophosphokinase 2 (318 aa).

Residue 96-101 (RQDKKD) coordinates ATP. The Mg(2+) site is built by Asp128, His130, Asp139, and Asp143. His130 contributes to the ATP binding site. The tract at residues 212-227 (KDRVAILVDDMADTCG) is binding of phosphoribosylpyrophosphate.

It belongs to the ribose-phosphate pyrophosphokinase family. As to quaternary structure, homodimer. The active form is probably a hexamer composed of 3 homodimers. It depends on Mg(2+) as a cofactor.

The catalysed reaction is D-ribose 5-phosphate + ATP = 5-phospho-alpha-D-ribose 1-diphosphate + AMP + H(+). It participates in metabolic intermediate biosynthesis; 5-phospho-alpha-D-ribose 1-diphosphate biosynthesis; 5-phospho-alpha-D-ribose 1-diphosphate from D-ribose 5-phosphate (route I): step 1/1. Activated by magnesium and inorganic phosphate. Competitively or non-competitively inhibited by ADP, 2,3-bisphosphoglyceride or GDP. Catalyzes the synthesis of phosphoribosylpyrophosphate (PRPP) that is essential for nucleotide synthesis. This Xenopus tropicalis (Western clawed frog) protein is Ribose-phosphate pyrophosphokinase 2 (prps2).